Here is a 259-residue protein sequence, read N- to C-terminus: MAASALGRMCGAAREKLSPGPGARGLGALARSLVLALLLVPVLCSDRSENPPNNATVSSPVVVTAPGNHTSPSVSQISTTLSPASAEKSGSSSAAPTPTAAPSAPEEEADSNEDPSMEEEDLLALNSSPATGKDTLDNGDYGEPDYDWTTNPRDEEPEDINIAISKESRRFRGFQDSVEVVKLPPPNREDSHFFFHLLIFAFCAAVVYVTYHNKRKIFLLVQSRKWRDGLCSKTVEYHRLDQNVNEAMPSLKITNDYIF.

The first 44 residues, 1–44, serve as a signal peptide directing secretion; the sequence is MAASALGRMCGAAREKLSPGPGARGLGALARSLVLALLLVPVLC. Topologically, residues 45–190 are extracellular; that stretch reads SDRSENPPNN…VKLPPPNRED (146 aa). The segment at 47–155 is disordered; sequence RSENPPNNAT…YDWTTNPRDE (109 aa). Residues 50–81 show a composition bias toward polar residues; the sequence is NPPNNATVSSPVVVTAPGNHTSPSVSQISTTL. N-linked (GlcNAc...) asparagine glycosylation is found at Asn54 and Asn68. Over residues 82-104 the composition is skewed to low complexity; sequence SPASAEKSGSSSAAPTPTAAPSA. A compositionally biased stretch (acidic residues) spans 105–122; that stretch reads PEEEADSNEDPSMEEEDL. Ser165 bears the Phosphoserine mark. A helical transmembrane segment spans residues 191–211; the sequence is SHFFFHLLIFAFCAAVVYVTY. Topologically, residues 212 to 259 are cytoplasmic; the sequence is HNKRKIFLLVQSRKWRDGLCSKTVEYHRLDQNVNEAMPSLKITNDYIF. Ser223 and Ser250 each carry phosphoserine.

The protein resides in the membrane. This chain is Keratinocyte-associated transmembrane protein 2 (Kct2), found in Mus musculus (Mouse).